A 70-amino-acid polypeptide reads, in one-letter code: Protein FlmC (70 aa).

In terms of biological role, component of a type I toxin-antitoxin (TA) system. Either this protein or sequences upstream of it are required for translation of downstream flmA; this could be translationally coupled to flmA. This chain is Protein FlmC (flmC), found in Escherichia coli (strain K12).